The primary structure comprises 437 residues: Methylenetetrahydrofolate--tRNA-(uracil-5-)-methyltransferase TrmFO (437 aa).

Position 10–15 (10–15 (GGGLAG)) interacts with FAD.

It belongs to the MnmG family. TrmFO subfamily. It depends on FAD as a cofactor.

Its subcellular location is the cytoplasm. The enzyme catalyses uridine(54) in tRNA + (6R)-5,10-methylene-5,6,7,8-tetrahydrofolate + NADH + H(+) = 5-methyluridine(54) in tRNA + (6S)-5,6,7,8-tetrahydrofolate + NAD(+). It carries out the reaction uridine(54) in tRNA + (6R)-5,10-methylene-5,6,7,8-tetrahydrofolate + NADPH + H(+) = 5-methyluridine(54) in tRNA + (6S)-5,6,7,8-tetrahydrofolate + NADP(+). Functionally, catalyzes the folate-dependent formation of 5-methyl-uridine at position 54 (M-5-U54) in all tRNAs. This is Methylenetetrahydrofolate--tRNA-(uracil-5-)-methyltransferase TrmFO from Geotalea daltonii (strain DSM 22248 / JCM 15807 / FRC-32) (Geobacter daltonii).